Consider the following 96-residue polypeptide: Co-chaperonin GroES (96 aa).

This sequence belongs to the GroES chaperonin family. In terms of assembly, heptamer of 7 subunits arranged in a ring. Interacts with the chaperonin GroEL.

Its subcellular location is the cytoplasm. In terms of biological role, together with the chaperonin GroEL, plays an essential role in assisting protein folding. The GroEL-GroES system forms a nano-cage that allows encapsulation of the non-native substrate proteins and provides a physical environment optimized to promote and accelerate protein folding. GroES binds to the apical surface of the GroEL ring, thereby capping the opening of the GroEL channel. In Legionella pneumophila (strain Paris), this protein is Co-chaperonin GroES.